We begin with the raw amino-acid sequence, 59 residues long: Protein translocase subunit SecE (59 aa).

A helical transmembrane segment spans residues 39–59 (VMALFLGLIDALFVALLSFFF).

The protein belongs to the SecE/SEC61-gamma family. Component of the Sec protein translocase complex. Heterotrimer consisting of SecY, SecE and SecG subunits. The heterotrimers can form oligomers, although 1 heterotrimer is thought to be able to translocate proteins. Interacts with the ribosome. Interacts with SecDF, and other proteins may be involved. Interacts with SecA.

The protein localises to the cell inner membrane. Its function is as follows. Essential subunit of the Sec protein translocation channel SecYEG. Clamps together the 2 halves of SecY. May contact the channel plug during translocation. This Treponema pallidum (strain Nichols) protein is Protein translocase subunit SecE.